The sequence spans 352 residues: GTPase Obg (352 aa).

The Obg domain maps to 1–159 (MQFIDQAEIQ…RMLRLELKLL (159 aa)). The OBG-type G domain maps to 160–330 (AEVGIIGLPN…LMQEIWGLLE (171 aa)). GTP contacts are provided by residues 166–173 (GLPNAGKS), 191–195 (FTTLV), 213–216 (DIPG), 280–283 (NKVD), and 311–313 (SAV). Mg(2+) is bound by residues Ser173 and Thr193.

This sequence belongs to the TRAFAC class OBG-HflX-like GTPase superfamily. OBG GTPase family. As to quaternary structure, monomer. Requires Mg(2+) as cofactor.

It is found in the cytoplasm. Functionally, an essential GTPase which binds GTP, GDP and possibly (p)ppGpp with moderate affinity, with high nucleotide exchange rates and a fairly low GTP hydrolysis rate. Plays a role in control of the cell cycle, stress response, ribosome biogenesis and in those bacteria that undergo differentiation, in morphogenesis control. In Trichodesmium erythraeum (strain IMS101), this protein is GTPase Obg.